Here is a 525-residue protein sequence, read N- to C-terminus: MPSAPSAAAPDTVLVVDFGAQYAQLIARRVREARVYSEIVPSTMPVAEMLAKNPAAIILSGGPSSVYAEGAPRLDREIFEAGVPVFGMCYGFQLMATTLGGTVDNTGAREYGRTPLHVSKSGSTLFEGTPDEQPVWMSHGDACSAAPEGFTVTASTDVVPVAAFENDEKRLYGVQYHPEVMHSTHGQQVLEHFLYRGAGLTPSWTTGNVIDEQVELIREQVGTRRAICGLSGGVDSAVAAALVQKAIGSQLTCVYVDHGLMRQGETEQVEKDFVAATGVQLKVVDAEERFLTALKGVSDPEEKRKIIGREFIRVFEQAQAEIIADEGPEVAFLVQGTLYPDVVESGGGTGTANIKSHHNVGGLPEDLEFELIEPLRKLFKDEVRMVGQELGLPDEIVQRQPFPGPGLGIRIVGEVTKERLDLLREADAIAREELTAAGLDREIWQCPVVLLADVRSVGVQGDGRTYGHPIVLRPVSSEDAMTADWSRLPYDTLAKISTRITNEVADVNRVVLDVTSKPPGTIEWE.

The Glutamine amidotransferase type-1 domain occupies 12-203 (TVLVVDFGAQ…LYRGAGLTPS (192 aa)). Cys89 (nucleophile) is an active-site residue. Active-site residues include His177 and Glu179. The 196-residue stretch at 204 to 399 (WTTGNVIDEQ…LGLPDEIVQR (196 aa)) folds into the GMPS ATP-PPase domain. 231–237 (SGGVDSA) is a binding site for ATP.

Homodimer.

The catalysed reaction is XMP + L-glutamine + ATP + H2O = GMP + L-glutamate + AMP + diphosphate + 2 H(+). Its pathway is purine metabolism; GMP biosynthesis; GMP from XMP (L-Gln route): step 1/1. Its function is as follows. Catalyzes the synthesis of GMP from XMP. The chain is GMP synthase [glutamine-hydrolyzing] from Streptomyces avermitilis (strain ATCC 31267 / DSM 46492 / JCM 5070 / NBRC 14893 / NCIMB 12804 / NRRL 8165 / MA-4680).